The following is a 118-amino-acid chain: Large ribosomal subunit protein bL20c (118 aa).

This sequence belongs to the bacterial ribosomal protein bL20 family.

The protein resides in the plastid. In terms of biological role, binds directly to 23S ribosomal RNA and is necessary for the in vitro assembly process of the 50S ribosomal subunit. It is not involved in the protein synthesizing functions of that subunit. The polypeptide is Large ribosomal subunit protein bL20c (Aneura mirabilis (Parasitic liverwort)).